The chain runs to 464 residues: Aspartyl protease AED1 (464 aa).

The N-terminal stretch at 1–25 (MSIMRNFLSMIIMLCVCLNWCFAEG) is a signal peptide. The Peptidase A1 domain maps to 132 to 460 (YIVTIGIGTP…DVAGGRVGFA (329 aa)). Residues Asp150 and Asp345 contribute to the active site. A disulfide bridge links Cys384 with Cys425.

The protein belongs to the peptidase A1 family.

It is found in the secreted. The protein localises to the extracellular space. Its subcellular location is the apoplast. In terms of biological role, aspartyl protease involved in a homeostatic feedback mechanism regulating systemic immunity. Has only mild or no influence on local defenses. Acts downstream of salicylic acid to suppress systemic immunity. This Arabidopsis thaliana (Mouse-ear cress) protein is Aspartyl protease AED1.